Here is a 214-residue protein sequence, read N- to C-terminus: Thymidylate kinase (214 aa).

10-17 (GGEGAGKS) contributes to the ATP binding site.

The protein belongs to the thymidylate kinase family.

It catalyses the reaction dTMP + ATP = dTDP + ADP. Phosphorylation of dTMP to form dTDP in both de novo and salvage pathways of dTTP synthesis. This chain is Thymidylate kinase, found in Brucella suis biovar 1 (strain 1330).